The primary structure comprises 180 residues: Nucleoside-triphosphatase THEP1 (180 aa).

ATP contacts are provided by residues 18-25 (GRPGVGKT) and 104-111 (LVIMDEIG).

The protein belongs to the THEP1 NTPase family.

It carries out the reaction a ribonucleoside 5'-triphosphate + H2O = a ribonucleoside 5'-diphosphate + phosphate + H(+). Functionally, has nucleotide phosphatase activity towards ATP, GTP, CTP, TTP and UTP. May hydrolyze nucleoside diphosphates with lower efficiency. In Metallosphaera sedula (strain ATCC 51363 / DSM 5348 / JCM 9185 / NBRC 15509 / TH2), this protein is Nucleoside-triphosphatase THEP1.